A 300-amino-acid polypeptide reads, in one-letter code: Ribosomal protein L11 methyltransferase (300 aa).

S-adenosyl-L-methionine contacts are provided by Thr152, Gly173, Asp195, and Asn234.

This sequence belongs to the methyltransferase superfamily. PrmA family.

The protein resides in the cytoplasm. It catalyses the reaction L-lysyl-[protein] + 3 S-adenosyl-L-methionine = N(6),N(6),N(6)-trimethyl-L-lysyl-[protein] + 3 S-adenosyl-L-homocysteine + 3 H(+). In terms of biological role, methylates ribosomal protein L11. The chain is Ribosomal protein L11 methyltransferase from Burkholderia lata (strain ATCC 17760 / DSM 23089 / LMG 22485 / NCIMB 9086 / R18194 / 383).